The chain runs to 377 residues: Mitogen-activated protein kinase mpkC (377 aa).

One can recognise a Protein kinase domain in the interval 20 to 299; the sequence is YVNPQPIGMG…AQDALRHPYL (280 aa). ATP is bound by residues 26–34 and Lys-49; that span reads IGMGSFGLV. Catalysis depends on Asp-141, which acts as the Proton acceptor. Thr-171 carries the post-translational modification Phosphothreonine. The short motif at 171–173 is the TXY element; it reads TGY. Tyr-173 is modified (phosphotyrosine).

It belongs to the protein kinase superfamily. Ser/Thr protein kinase family. MAP kinase subfamily. HOG1 sub-subfamily. It depends on Mg(2+) as a cofactor. Dually phosphorylated on Thr-171 and Tyr-173, which activates the enzyme.

The catalysed reaction is L-seryl-[protein] + ATP = O-phospho-L-seryl-[protein] + ADP + H(+). It catalyses the reaction L-threonyl-[protein] + ATP = O-phospho-L-threonyl-[protein] + ADP + H(+). With respect to regulation, activated by tyrosine and threonine phosphorylation. Functionally, mitogen-activated protein kinase required for growth on media where sorbitol or mannitol is the sole carbon source. The sequence is that of Mitogen-activated protein kinase mpkC (mpkc) from Neosartorya fischeri (strain ATCC 1020 / DSM 3700 / CBS 544.65 / FGSC A1164 / JCM 1740 / NRRL 181 / WB 181) (Aspergillus fischerianus).